Consider the following 456-residue polypeptide: RuvB-like helicase 1 (456 aa).

Residue 70–77 (GPPGTGKT) coordinates ATP.

It belongs to the RuvB family. Forms homohexameric rings. May form a dodecamer with rept made of two stacked hexameric rings. Component of the chromatin remodeling Ino80 complex.

It localises to the nucleus. It catalyses the reaction ATP + H2O = ADP + phosphate + H(+). Acts as a transcriptional coactivator in Wg signaling caused by altered arm signaling. Pont and rept interfere antagonistically with nuclear arm signaling function, and are required to enhance or reduce arm activity, respectively. Also an essential cofactor for the normal function of Myc; required for cellular proliferation and growth. Functionally, proposed core component of the chromatin remodeling Ino80 complex which is involved in transcriptional regulation, DNA replication and probably DNA repair. The chain is RuvB-like helicase 1 from Drosophila pseudoobscura pseudoobscura (Fruit fly).